The chain runs to 251 residues: Ubiquinone/menaquinone biosynthesis C-methyltransferase UbiE (251 aa).

Residues threonine 74, aspartate 95, asparagine 123 to alanine 124, and serine 140 each bind S-adenosyl-L-methionine.

The protein belongs to the class I-like SAM-binding methyltransferase superfamily. MenG/UbiE family.

The catalysed reaction is a 2-demethylmenaquinol + S-adenosyl-L-methionine = a menaquinol + S-adenosyl-L-homocysteine + H(+). It carries out the reaction a 2-methoxy-6-(all-trans-polyprenyl)benzene-1,4-diol + S-adenosyl-L-methionine = a 5-methoxy-2-methyl-3-(all-trans-polyprenyl)benzene-1,4-diol + S-adenosyl-L-homocysteine + H(+). It functions in the pathway quinol/quinone metabolism; menaquinone biosynthesis; menaquinol from 1,4-dihydroxy-2-naphthoate: step 2/2. It participates in cofactor biosynthesis; ubiquinone biosynthesis. Methyltransferase required for the conversion of demethylmenaquinol (DMKH2) to menaquinol (MKH2) and the conversion of 2-polyprenyl-6-methoxy-1,4-benzoquinol (DDMQH2) to 2-polyprenyl-3-methyl-6-methoxy-1,4-benzoquinol (DMQH2). The protein is Ubiquinone/menaquinone biosynthesis C-methyltransferase UbiE of Yersinia enterocolitica serotype O:8 / biotype 1B (strain NCTC 13174 / 8081).